The chain runs to 122 residues: Large ribosomal subunit protein uL14 (122 aa).

Belongs to the universal ribosomal protein uL14 family. In terms of assembly, part of the 50S ribosomal subunit. Forms a cluster with proteins L3 and L19. In the 70S ribosome, L14 and L19 interact and together make contacts with the 16S rRNA in bridges B5 and B8.

In terms of biological role, binds to 23S rRNA. Forms part of two intersubunit bridges in the 70S ribosome. This chain is Large ribosomal subunit protein uL14, found in Colwellia psychrerythraea (strain 34H / ATCC BAA-681) (Vibrio psychroerythus).